We begin with the raw amino-acid sequence, 95 residues long: Co-chaperonin GroES (95 aa).

The protein belongs to the GroES chaperonin family. Heptamer of 7 subunits arranged in a ring. Interacts with the chaperonin GroEL.

The protein localises to the cytoplasm. In terms of biological role, together with the chaperonin GroEL, plays an essential role in assisting protein folding. The GroEL-GroES system forms a nano-cage that allows encapsulation of the non-native substrate proteins and provides a physical environment optimized to promote and accelerate protein folding. GroES binds to the apical surface of the GroEL ring, thereby capping the opening of the GroEL channel. The polypeptide is Co-chaperonin GroES (Rickettsia prowazekii (strain Madrid E)).